We begin with the raw amino-acid sequence, 172 residues long: Nucleoside-triphosphatase THEP1 (172 aa).

ATP contacts are provided by residues 11-18 (GKPGIGKT) and 101-108 (IILIDEIG).

The protein belongs to the THEP1 NTPase family.

It carries out the reaction a ribonucleoside 5'-triphosphate + H2O = a ribonucleoside 5'-diphosphate + phosphate + H(+). Functionally, has nucleotide phosphatase activity towards ATP, GTP, CTP, TTP and UTP. May hydrolyze nucleoside diphosphates with lower efficiency. The sequence is that of Nucleoside-triphosphatase THEP1 from Sulfolobus acidocaldarius (strain ATCC 33909 / DSM 639 / JCM 8929 / NBRC 15157 / NCIMB 11770).